Reading from the N-terminus, the 345-residue chain is Probable galacturonosyltransferase-like 3 (345 aa).

Residues 1–7 (MSSLRLR) are Cytoplasmic-facing. Residues 8–28 (LCLLLLLPITISCVTVTLTDL) form a helical; Signal-anchor for type II membrane protein membrane-spanning segment. At 29 to 345 (PAFREAPAFR…FRYSPLISDS (317 aa)) the chain is on the lumenal side. Residue asparagine 197 is glycosylated (N-linked (GlcNAc...) asparagine).

Belongs to the glycosyltransferase 8 family.

The protein localises to the golgi apparatus membrane. It participates in glycan metabolism; pectin biosynthesis. May be involved in pectin and/or xylans biosynthesis in cell walls. This Arabidopsis thaliana (Mouse-ear cress) protein is Probable galacturonosyltransferase-like 3 (GATL3).